The chain runs to 465 residues: 5-cytosine rRNA methyltransferase nsun-4 (465 aa).

A mitochondrion-targeting transit peptide spans 1 to 6 (MSCLRQ). Positions 106–130 (QAIETKRKSVEEKANRETQKVKHEI) are enriched in basic and acidic residues. The disordered stretch occupies residues 106 to 145 (QAIETKRKSVEEKANRETQKVKHEISNPSTSTNTEDSEPD). S-adenosyl-L-methionine contacts are provided by residues 260 to 266 (CAAPGGK), aspartate 283, aspartate 316, and aspartate 335. Cysteine 390 functions as the Nucleophile in the catalytic mechanism.

This sequence belongs to the class I-like SAM-binding methyltransferase superfamily. RsmB/NOP family.

It localises to the mitochondrion. The enzyme catalyses a cytidine in rRNA + S-adenosyl-L-methionine = a 5-methylcytidine in rRNA + S-adenosyl-L-homocysteine + H(+). It carries out the reaction a cytidine in tRNA + S-adenosyl-L-methionine = a 5-methylcytidine in tRNA + S-adenosyl-L-homocysteine + H(+). Functionally, mitochondrial methyltransferase which methylates cytosine to 5-methylcytosine (m5C) in rRNAs and tRNAs at multiple sites. May play a role in the translation of leucine and proline codons. The chain is 5-cytosine rRNA methyltransferase nsun-4 from Caenorhabditis elegans.